The following is a 643-amino-acid chain: Cell pattern formation-associated protein asm-1 (643 aa).

The disordered stretch occupies residues 1–37 (MNPNTPADVYYGQMSQGSSMPVTTVPSHSHYASQQPP). Positions 13 to 33 (QMSQGSSMPVTTVPSHSHYAS) are enriched in polar residues. Residues 116–222 (RVTATLWEDE…HNIGALLYHP (107 aa)) form the HTH APSES-type domain. Residues 150 to 171 (GTKLLNVAGMTRGRRDGILKSE) constitute a DNA-binding region (H-T-H motif). The segment at 229–627 (SQVMAAAEQR…GSLPSPTYTA (399 aa)) is disordered. A compositionally biased stretch (polar residues) spans 306 to 335 (DGYQWSQQSMSGTQGNSSLSLDTSLGSNAR). Over residues 336–349 (SMPSTPATTPPGST) the composition is skewed to low complexity. Positions 350-367 (IQSMQNYPPVSQSYESSR) are enriched in polar residues. Residues 368–391 (QMYQGQSAQQAQYQSQQHYSSQPQ) are compositionally biased toward low complexity. Composition is skewed to polar residues over residues 471–481 (GSYNYNTQAVN), 529–551 (QPSSSLYNVMSNERTGSNGTQGN), and 563–577 (SLPNGYSAQPSVMNG). Positions 583 to 612 (KRGRDDDDDGGRPTTSAPNLGPGMDMKRRK) are nuclear localization domain.

Belongs to the EFG1/PHD1/stuA family.

The protein resides in the nucleus. Functionally, transcription factor that regulates asexual reproduction. Binds the StuA-response elements (StRE) with the consensus sequence 5'-(A/T)CGCG(T/A)N(A/C)-3' at the promoters of target genes. Required for rapid conidial germination, normal vegetative morphology, and protoperithecium formation. In Neurospora crassa (strain ATCC 24698 / 74-OR23-1A / CBS 708.71 / DSM 1257 / FGSC 987), this protein is Cell pattern formation-associated protein asm-1.